The sequence spans 323 residues: NADH-ubiquinone oxidoreductase chain 1 (323 aa).

A run of 8 helical transmembrane segments spans residues 8–28, 75–95, 105–125, 151–171, 177–197, 234–254, 258–278, and 298–318; these read LINPLLYMIPILLAVAFLTLI, MFLIAPTMALALAMSIWAPLP, LGILFILALSSLAVYTILGSG, LGLILLCMIMLAGGFTYTTLM, MWLIIPGWPMAAMWYISTLAE, ANILMMNTLSYLILFLGSSFM, ELTTISLMIKSSILSMIFLWV, and FLPITLAMTLWHISLPISMLG.

Belongs to the complex I subunit 1 family. Core subunit of respiratory chain NADH dehydrogenase (Complex I) which is composed of 45 different subunits.

It is found in the mitochondrion inner membrane. It catalyses the reaction a ubiquinone + NADH + 5 H(+)(in) = a ubiquinol + NAD(+) + 4 H(+)(out). In terms of biological role, core subunit of the mitochondrial membrane respiratory chain NADH dehydrogenase (Complex I) which catalyzes electron transfer from NADH through the respiratory chain, using ubiquinone as an electron acceptor. Essential for the catalytic activity and assembly of complex I. The polypeptide is NADH-ubiquinone oxidoreductase chain 1 (mt-nd1) (Xenopus laevis (African clawed frog)).